The chain runs to 614 residues: Vitamin B12 transporter BtuB (614 aa).

Residues methionine 1–alanine 20 form the signal peptide. The short motif at aspartate 26 to asparagine 33 is the TonB box element. Residues proline 38–threonine 152 form the TBDR plug domain. Residues leucine 83, serine 85, asparagine 92, and glycine 110–serine 111 contribute to the cyanocob(III)alamin site. Residues glutamate 155–phenylalanine 614 form the TBDR beta-barrel domain. The next 3 beta stranded transmembrane spans lie at threonine 158–glycine 165, tyrosine 169–glutamine 178, and threonine 184–threonine 195. Positions 199, 211, 213, and 215 each coordinate Ca(2+). 2 beta stranded membrane-spanning segments follow: residues phenylalanine 217–glutamate 227 and aspartate 232–asparagine 248. Tyrosine 249 and aspartate 250 together coordinate Ca(2+). Residue alanine 251 coordinates cyanocob(III)alamin. Aspartate 261 contributes to the Ca(2+) binding site. 14 beta stranded membrane passes run arginine 263–asparagine 277, glutamate 279–asparagine 296, threonine 309–isoleucine 325, histidine 328–tryptophan 337, tyrosine 353–glycine 369, phenylalanine 371–aspartate 381, phenylalanine 385–isoleucine 400, tyrosine 403–asparagine 417, lysine 434–glutamate 443, valine 449–asparagine 458, tyrosine 473–phenylalanine 490, proline 494–alanine 509, arginine 517–tryptophan 529, and aspartate 535–aspartate 550. Threonine 309 lines the cyanocob(III)alamin pocket. Position 517 (arginine 517) interacts with cyanocob(III)alamin. A cyanocob(III)alamin-binding site is contributed by tyrosine 551. 3 beta stranded membrane-spanning segments follow: residues threonine 558–alanine 572, isoleucine 585–valine 596, and alanine 602–phenylalanine 614. The TonB C-terminal box signature appears at tyrosine 597–phenylalanine 614.

Belongs to the TonB-dependent receptor family. BtuB (TC 1.B.14.3.1) subfamily.

The protein resides in the cell outer membrane. In terms of biological role, involved in the active translocation of vitamin B12 (cyanocobalamin) across the outer membrane to the periplasmic space. It derives its energy for transport by interacting with the trans-periplasmic membrane protein TonB. In Escherichia coli O157:H7, this protein is Vitamin B12 transporter BtuB.